The following is a 526-amino-acid chain: MFSLQDLCRKHLFILPDVFGEHVLQQLGLYWEKHGSLQRIGNDHILIRRDLILSINEALKIAAEEGNNEVVKLLLLWKGNLHYAIIGALEGDQYDLIYTYENQIEDYHHILPLIQDAKTFEKCHALERFCDVPCLLEHAIKHNMLPILQKYQEELFIRVYLRETLFELACLWQRYDILKWIEQTMHVYDLKIIFNIAISKRDLSMYSLGYVLLFDRGNTEATLLTQHLEKTAAKGLLHFVLETLKYGGNINIVLSQAVKYNHRKLLDYFLRQLPRKNIEKLLLLAVQEKASKKTLNLLLSYLNYSVKRIKKLLRYVIEYESTLVIRILLKKRINLIDAVLEKTVRYFSETKVKTIMDELSINPEKVIKMAIQKMRTDIVIQTSYIWEDDLERLIRLKNMVYTIKYEHGKKMLMKVIHGIYKNLLHDEKEKVMFHLAKFYIAQNAATQFRDICKDCCKLDVARFKPRFKQLILDCLDIITKKTCLNIMEILENHIISLFAMKMMTEDEKNLGLELLYKVISYKMISY.

The protein belongs to the asfivirus MGF 505 family.

Plays a role in virus cell tropism, and may be required for efficient virus replication in macrophages. In African swine fever virus (isolate Pig/Kenya/KEN-50/1950) (ASFV), this protein is Protein MGF 505-2R.